The sequence spans 208 residues: Large ribosomal subunit protein uL4 (208 aa).

A disordered region spans residues 45–89 (RQGTHAHKNRSAVSGGGKKPWRQKGTGRARQGSTRSPQWRGGGTV).

It belongs to the universal ribosomal protein uL4 family. As to quaternary structure, part of the 50S ribosomal subunit.

In terms of biological role, one of the primary rRNA binding proteins, this protein initially binds near the 5'-end of the 23S rRNA. It is important during the early stages of 50S assembly. It makes multiple contacts with different domains of the 23S rRNA in the assembled 50S subunit and ribosome. Its function is as follows. Forms part of the polypeptide exit tunnel. The chain is Large ribosomal subunit protein uL4 from Lactococcus lactis subsp. lactis (strain IL1403) (Streptococcus lactis).